A 79-amino-acid polypeptide reads, in one-letter code: Putative membrane protein insertion efficiency factor (79 aa).

The protein belongs to the UPF0161 family.

The protein localises to the cell inner membrane. Functionally, could be involved in insertion of integral membrane proteins into the membrane. In Cytophaga hutchinsonii (strain ATCC 33406 / DSM 1761 / CIP 103989 / NBRC 15051 / NCIMB 9469 / D465), this protein is Putative membrane protein insertion efficiency factor.